A 181-amino-acid polypeptide reads, in one-letter code: Large ribosomal subunit protein uL5 (181 aa).

Belongs to the universal ribosomal protein uL5 family. As to quaternary structure, part of the 50S ribosomal subunit; part of the 5S rRNA/L5/L18/L25 subcomplex. Contacts the 5S rRNA and the P site tRNA. Forms a bridge to the 30S subunit in the 70S ribosome.

Functionally, this is one of the proteins that bind and probably mediate the attachment of the 5S RNA into the large ribosomal subunit, where it forms part of the central protuberance. In the 70S ribosome it contacts protein S13 of the 30S subunit (bridge B1b), connecting the 2 subunits; this bridge is implicated in subunit movement. Contacts the P site tRNA; the 5S rRNA and some of its associated proteins might help stabilize positioning of ribosome-bound tRNAs. The polypeptide is Large ribosomal subunit protein uL5 (Sulfurimonas denitrificans (strain ATCC 33889 / DSM 1251) (Thiomicrospira denitrificans (strain ATCC 33889 / DSM 1251))).